Consider the following 210-residue polypeptide: LexA repressor (210 aa).

A DNA-binding region (H-T-H motif) is located at residues 30 to 50 (RVEIAREIGFKSPNAAEEHLK). Residues Ser127 and Lys164 each act as for autocatalytic cleavage activity in the active site.

Belongs to the peptidase S24 family. In terms of assembly, homodimer.

It carries out the reaction Hydrolysis of Ala-|-Gly bond in repressor LexA.. Its function is as follows. Represses a number of genes involved in the response to DNA damage (SOS response), including recA and lexA. In the presence of single-stranded DNA, RecA interacts with LexA causing an autocatalytic cleavage which disrupts the DNA-binding part of LexA, leading to derepression of the SOS regulon and eventually DNA repair. The polypeptide is LexA repressor (Actinobacillus pleuropneumoniae serotype 5b (strain L20)).